A 31-amino-acid chain; its full sequence is Photosystem I reaction center subunit XII (31 aa).

The helical transmembrane segment at 7–26 threads the bilayer; it reads QVYVALVIALLPAVLAFRLS.

The protein belongs to the PsaM family.

It localises to the cellular thylakoid membrane. This is Photosystem I reaction center subunit XII from Thermosynechococcus vestitus (strain NIES-2133 / IAM M-273 / BP-1).